The sequence spans 52 residues: UPF0057 membrane protein PA0567 (52 aa).

2 consecutive transmembrane segments (helical) span residues 6-26 and 29-49; these read ILIA…FGGA and LNIL…VYII.

This sequence belongs to the UPF0057 (PMP3) family.

The protein localises to the cell membrane. The polypeptide is UPF0057 membrane protein PA0567 (Pseudomonas aeruginosa (strain ATCC 15692 / DSM 22644 / CIP 104116 / JCM 14847 / LMG 12228 / 1C / PRS 101 / PAO1)).